Consider the following 315-residue polypeptide: Methylglutaconyl-CoA hydratase, mitochondrial (315 aa).

Residues methionine 1–tyrosine 43 constitute a mitochondrion transit peptide. Position 76 is an N6-acetyllysine; alternate (lysine 76). Position 76 is an N6-succinyllysine; alternate (lysine 76). An RNA-binding region spans residues lysine 81–lysine 95. At lysine 85 the chain carries N6-succinyllysine. Residues lysine 89 and lysine 120 each carry the N6-acetyllysine; alternate modification. An N6-succinyllysine; alternate mark is found at lysine 89 and lysine 120. Residues lysine 124 and lysine 136 each carry the N6-succinyllysine modification. N6-acetyllysine; alternate is present on residues lysine 180 and lysine 187. Lysine 180 and lysine 187 each carry N6-succinyllysine; alternate. Lysine 305 is modified (N6-succinyllysine).

The protein belongs to the enoyl-CoA hydratase/isomerase family. Homohexamer.

It localises to the mitochondrion. It carries out the reaction (3S)-3-hydroxy-3-methylglutaryl-CoA = 3-methyl-(2E)-glutaconyl-CoA + H2O. It catalyses the reaction (3S)-citramalyl-CoA = itaconyl-CoA + H2O. The enzyme catalyses 3-hydroxyisovaleryl-CoA = 3-methylbut-2-enoyl-CoA + H2O. The catalysed reaction is (S)-3-hydroxyglutaryl-CoA = (2E)-glutaconyl-CoA + H2O. It functions in the pathway amino-acid degradation; L-leucine degradation; (S)-3-hydroxy-3-methylglutaryl-CoA from 3-isovaleryl-CoA: step 3/3. In terms of biological role, catalyzes the fifth step in the leucine degradation pathway, the reversible hydration of 3-methylglutaconyl-CoA (3-MG-CoA) to 3-hydroxy-3-methylglutaryl-CoA (HMG-CoA). Can catalyze the reverse reaction but at a much lower rate in vitro. HMG-CoA is then quickly degraded by another enzyme (such as HMG-CoA lyase) to give acetyl-CoA and acetoacetate. Uses other substrates such as (2E)-glutaconyl-CoA efficiently in vitro, and to a lesser extent 3-methylcrotonyl-CoA (3-methyl-(2E)-butenoyl-CoA), crotonyl-CoA ((2E)-butenoyl-CoA) and 3-hydroxybutanoyl-CoA (the missing carboxylate reduces affinity to the active site). Originally it was identified as an RNA-binding protein as it binds to AU-rich elements (AREs) in vitro. AREs direct rapid RNA degradation and mRNA deadenylation. Might have itaconyl-CoA hydratase activity, converting itaconyl-CoA into citramalyl-CoA in the C5-dicarboxylate catabolism pathway. The C5-dicarboxylate catabolism pathway is required to detoxify itaconate, an antimicrobial metabolite and immunomodulator produced by macrophages during certain infections, that can act as a vitamin B12-poisoning metabolite. In Rattus norvegicus (Rat), this protein is Methylglutaconyl-CoA hydratase, mitochondrial.